The chain runs to 91 residues: Small ribosomal subunit protein uS19 (91 aa).

The protein belongs to the universal ribosomal protein uS19 family.

In terms of biological role, protein S19 forms a complex with S13 that binds strongly to the 16S ribosomal RNA. This Burkholderia cenocepacia (strain HI2424) protein is Small ribosomal subunit protein uS19.